Reading from the N-terminus, the 584-residue chain is Chondroitin proteoglycan 1 (584 aa).

The signal sequence occupies residues 1–17 (MTLKPVLLAFLVASAYA). Residue Ser-50 is glycosylated (O-linked (Xyl...) (chondroitin sulfate) serine). 3 Chitin-binding type-2 domains span residues 58–115 (DTDC…QCGG), 211–268 (TKSC…ECTN), and 524–578 (VPAC…ECHQ). 2 disulfide bridges follow: Cys-91/Cys-104 and Cys-244/Cys-257. A disordered region spans residues 267-295 (TNGSGNDEGSADETTPESSGEMPYSNGYG). An N-linked (GlcNAc...) asparagine glycan is attached at Asn-268. Cys-554 and Cys-567 are joined by a disulfide.

Expressed in the germline.

Required for polar body extrusion during cytokinesis in embryo development. Affects cortical granule size. Has roles in meiotic chromosome segregation, osmotic barrier function and polarization in conjunction with cpg-2. Binds chitin. The protein is Chondroitin proteoglycan 1 (cpg-1) of Caenorhabditis elegans.